The following is a 303-amino-acid chain: Probable cell division protein WhiA (303 aa).

A DNA-binding region (H-T-H motif) is located at residues Ser272 to Leu303.

This sequence belongs to the WhiA family.

Involved in cell division and chromosome segregation. This chain is Probable cell division protein WhiA, found in Streptococcus pneumoniae serotype 2 (strain D39 / NCTC 7466).